The following is a 130-amino-acid chain: Small ribosomal subunit protein uS9 (130 aa).

Belongs to the universal ribosomal protein uS9 family.

The polypeptide is Small ribosomal subunit protein uS9 (Streptococcus equi subsp. equi (strain 4047)).